The chain runs to 245 residues: tRNA pseudouridine synthase A (245 aa).

Asp52 acts as the Nucleophile in catalysis. Tyr111 provides a ligand contact to substrate.

The protein belongs to the tRNA pseudouridine synthase TruA family. In terms of assembly, homodimer.

The enzyme catalyses uridine(38/39/40) in tRNA = pseudouridine(38/39/40) in tRNA. Formation of pseudouridine at positions 38, 39 and 40 in the anticodon stem and loop of transfer RNAs. This Rickettsia felis (strain ATCC VR-1525 / URRWXCal2) (Rickettsia azadi) protein is tRNA pseudouridine synthase A.